Reading from the N-terminus, the 120-residue chain is MYTLAGYESFWAFLLIASLVPVLAVGTSSLVAPSSKAAEKRTSYESGIEPMGESWIQFQIRYYMFALVFVVFDVETVFLYPWAMSFQQLGVLAFIEALVFVLVLIIGLVYAWRKGALEWS.

3 helical membrane-spanning segments follow: residues 10-30, 64-84, and 89-109; these read FWAF…TSSL, MFAL…PWAM, and LGVL…IGLV.

This sequence belongs to the complex I subunit 3 family. In terms of assembly, NDH is composed of at least 16 different subunits, 5 of which are encoded in the nucleus.

The protein localises to the plastid. The protein resides in the chloroplast thylakoid membrane. The enzyme catalyses a plastoquinone + NADH + (n+1) H(+)(in) = a plastoquinol + NAD(+) + n H(+)(out). The catalysed reaction is a plastoquinone + NADPH + (n+1) H(+)(in) = a plastoquinol + NADP(+) + n H(+)(out). Its function is as follows. NDH shuttles electrons from NAD(P)H:plastoquinone, via FMN and iron-sulfur (Fe-S) centers, to quinones in the photosynthetic chain and possibly in a chloroplast respiratory chain. The immediate electron acceptor for the enzyme in this species is believed to be plastoquinone. Couples the redox reaction to proton translocation, and thus conserves the redox energy in a proton gradient. The polypeptide is NAD(P)H-quinone oxidoreductase subunit 3, chloroplastic (Zygnema circumcarinatum (Green alga)).